A 116-amino-acid chain; its full sequence is NADH-ubiquinone oxidoreductase chain 3 (116 aa).

The next 3 membrane-spanning stretches (helical) occupy residues 3-23 (LILA…MIAF), 56-76 (FFLV…LLPL), and 85-105 (PTLA…GLIH).

This sequence belongs to the complex I subunit 3 family.

The protein resides in the mitochondrion membrane. The enzyme catalyses a ubiquinone + NADH + 5 H(+)(in) = a ubiquinol + NAD(+) + 4 H(+)(out). Its function is as follows. Core subunit of the mitochondrial membrane respiratory chain NADH dehydrogenase (Complex I) that is believed to belong to the minimal assembly required for catalysis. Complex I functions in the transfer of electrons from NADH to the respiratory chain. The immediate electron acceptor for the enzyme is believed to be ubiquinone. In Latimeria chalumnae (Coelacanth), this protein is NADH-ubiquinone oxidoreductase chain 3 (MT-ND3).